Reading from the N-terminus, the 176-residue chain is Large ribosomal subunit protein eL6 (176 aa).

A disordered region spans residues M1–Q27.

This sequence belongs to the eukaryotic ribosomal protein eL6 family. In terms of assembly, component of the large ribosomal subunit. Mature ribosomes consist of a small (40S) and a large (60S) subunit. The 40S subunit contains about 32 different proteins and 1 molecule of RNA (18S). The 60S subunit contains 45 different proteins and 3 molecules of RNA (25S, 5.8S and 5S).

Its subcellular location is the cytoplasm. In terms of biological role, component of the ribosome, a large ribonucleoprotein complex responsible for the synthesis of proteins in the cell. The small ribosomal subunit (SSU) binds messenger RNAs (mRNAs) and translates the encoded message by selecting cognate aminoacyl-transfer RNA (tRNA) molecules. The large subunit (LSU) contains the ribosomal catalytic site termed the peptidyl transferase center (PTC), which catalyzes the formation of peptide bonds, thereby polymerizing the amino acids delivered by tRNAs into a polypeptide chain. The nascent polypeptides leave the ribosome through a tunnel in the LSU and interact with protein factors that function in enzymatic processing, targeting, and the membrane insertion of nascent chains at the exit of the ribosomal tunnel. The sequence is that of Large ribosomal subunit protein eL6 from Candida albicans (strain SC5314 / ATCC MYA-2876) (Yeast).